A 144-amino-acid polypeptide reads, in one-letter code: MVITLVGEKLAKPGVEFIYYGPAEPCKSCRLARVCTGNLEPGRRYKIIKVRNMEYPCLLHEGKVRVVEVVEPAIDVIIEPRYAVAGSKITLKFVECDDPEKVDLVRPEGLFEGDVVKILEIIGDIECNGRKYKIAKVIRENTQK.

Belongs to the UPF0179 family.

This Pyrococcus furiosus (strain ATCC 43587 / DSM 3638 / JCM 8422 / Vc1) protein is UPF0179 protein PF1381.